Consider the following 701-residue polypeptide: Polyribonucleotide nucleotidyltransferase (701 aa).

Mg(2+)-binding residues include Asp-487 and Asp-493. The KH domain maps to 554–613 (PTMIAMKIDTDKIRDVIGKGGATIRAICEETKASIDIEDDGSIKIFGETKEAADAAKQRI). The S1 motif domain occupies 623-691 (GKIYVGKVER…NRGRIKLSIK (69 aa)).

This sequence belongs to the polyribonucleotide nucleotidyltransferase family. In terms of assembly, component of the RNA degradosome, which is a multiprotein complex involved in RNA processing and mRNA degradation. The cofactor is Mg(2+).

The protein resides in the cytoplasm. It carries out the reaction RNA(n+1) + phosphate = RNA(n) + a ribonucleoside 5'-diphosphate. Involved in mRNA degradation. Catalyzes the phosphorolysis of single-stranded polyribonucleotides processively in the 3'- to 5'-direction. The sequence is that of Polyribonucleotide nucleotidyltransferase from Pseudomonas entomophila (strain L48).